Consider the following 283-residue polypeptide: MKQYLDLCNRIVNEGEWVSNERTGKRCLTVINADLTYDVSKGEFPLVTTRKSYWKSAIAEIIGYLRGYDNAADFRALGTKTWDANANENEVWLNSPYRKGEDDMGLCYGAIGRNFPKPDGGHIDLLKQIIDDLSRGVDNRGEILTFYHPGAFHMACLRPCMYSHHFSLLGDTLYLNSTQRSCDVPLGLNFNMVQVYVLLAIVAQITGKKPGKAFHKIVNAHIYEDQLELMRDVQLKREPYPLPTLKINPEIKSLKDIETWVTMDDFEIEGYQFHEPIAYPFSV.

A dUMP-binding site is contributed by Arg22. The active-site Nucleophile is the Cys160. DUMP is bound by residues 180–183 (RSCD), Asn191, and 221–223 (HIY). Residue Asp183 coordinates (6R)-5,10-methylene-5,6,7,8-tetrahydrofolate. Ser282 contributes to the (6R)-5,10-methylene-5,6,7,8-tetrahydrofolate binding site.

This sequence belongs to the thymidylate synthase family. Bacterial-type ThyA subfamily. Homodimer.

Its subcellular location is the cytoplasm. The catalysed reaction is dUMP + (6R)-5,10-methylene-5,6,7,8-tetrahydrofolate = 7,8-dihydrofolate + dTMP. It participates in pyrimidine metabolism; dTTP biosynthesis. Catalyzes the reductive methylation of 2'-deoxyuridine-5'-monophosphate (dUMP) to 2'-deoxythymidine-5'-monophosphate (dTMP) while utilizing 5,10-methylenetetrahydrofolate (mTHF) as the methyl donor and reductant in the reaction, yielding dihydrofolate (DHF) as a by-product. This enzymatic reaction provides an intracellular de novo source of dTMP, an essential precursor for DNA biosynthesis. This is Thymidylate synthase from Marinomonas sp. (strain MWYL1).